A 161-amino-acid polypeptide reads, in one-letter code: N5-carboxyaminoimidazole ribonucleotide mutase (161 aa).

Substrate-binding residues include S9, D12, and R39.

This sequence belongs to the AIR carboxylase family. Class I subfamily.

The catalysed reaction is 5-carboxyamino-1-(5-phospho-D-ribosyl)imidazole + H(+) = 5-amino-1-(5-phospho-D-ribosyl)imidazole-4-carboxylate. Its pathway is purine metabolism; IMP biosynthesis via de novo pathway; 5-amino-1-(5-phospho-D-ribosyl)imidazole-4-carboxylate from 5-amino-1-(5-phospho-D-ribosyl)imidazole (N5-CAIR route): step 2/2. Its function is as follows. Catalyzes the conversion of N5-carboxyaminoimidazole ribonucleotide (N5-CAIR) to 4-carboxy-5-aminoimidazole ribonucleotide (CAIR). In Vibrio parahaemolyticus serotype O3:K6 (strain RIMD 2210633), this protein is N5-carboxyaminoimidazole ribonucleotide mutase.